A 379-amino-acid polypeptide reads, in one-letter code: Cell division protein FtsZ (379 aa).

Residues 18–22, 105–107, E136, R140, and D184 each bind GTP; these read GGGVN and GTG.

It belongs to the FtsZ family. In terms of assembly, homodimer. Polymerizes to form a dynamic ring structure in a strictly GTP-dependent manner. Interacts directly with several other division proteins.

Its subcellular location is the cytoplasm. Its function is as follows. Essential cell division protein that forms a contractile ring structure (Z ring) at the future cell division site. The regulation of the ring assembly controls the timing and the location of cell division. One of the functions of the FtsZ ring is to recruit other cell division proteins to the septum to produce a new cell wall between the dividing cells. Binds GTP and shows GTPase activity. This is Cell division protein FtsZ from Mycobacterium leprae (strain TN).